The sequence spans 355 residues: Protein RecA (355 aa).

Residue 65-72 (GPESSGKT) participates in ATP binding.

This sequence belongs to the RecA family.

Its subcellular location is the cytoplasm. Can catalyze the hydrolysis of ATP in the presence of single-stranded DNA, the ATP-dependent uptake of single-stranded DNA by duplex DNA, and the ATP-dependent hybridization of homologous single-stranded DNAs. It interacts with LexA causing its activation and leading to its autocatalytic cleavage. In Pseudomonas entomophila (strain L48), this protein is Protein RecA.